Reading from the N-terminus, the 212-residue chain is Uracil phosphoribosyltransferase (212 aa).

Residues R78, R103, and 130–138 contribute to the 5-phospho-alpha-D-ribose 1-diphosphate site; that span reads DPMLATGSS. Residues I193 and 198-200 each bind uracil; that span reads GDA. Position 199 (D199) interacts with 5-phospho-alpha-D-ribose 1-diphosphate.

This sequence belongs to the UPRTase family. Mg(2+) serves as cofactor.

The catalysed reaction is UMP + diphosphate = 5-phospho-alpha-D-ribose 1-diphosphate + uracil. The protein operates within pyrimidine metabolism; UMP biosynthesis via salvage pathway; UMP from uracil: step 1/1. Allosterically activated by GTP. Its function is as follows. Catalyzes the conversion of uracil and 5-phospho-alpha-D-ribose 1-diphosphate (PRPP) to UMP and diphosphate. The polypeptide is Uracil phosphoribosyltransferase (Pseudomonas syringae pv. tomato (strain ATCC BAA-871 / DC3000)).